Consider the following 194-residue polypeptide: Protein GrpE (194 aa).

It belongs to the GrpE family. Homodimer.

The protein resides in the cytoplasm. Its function is as follows. Participates actively in the response to hyperosmotic and heat shock by preventing the aggregation of stress-denatured proteins, in association with DnaK and GrpE. It is the nucleotide exchange factor for DnaK and may function as a thermosensor. Unfolded proteins bind initially to DnaJ; upon interaction with the DnaJ-bound protein, DnaK hydrolyzes its bound ATP, resulting in the formation of a stable complex. GrpE releases ADP from DnaK; ATP binding to DnaK triggers the release of the substrate protein, thus completing the reaction cycle. Several rounds of ATP-dependent interactions between DnaJ, DnaK and GrpE are required for fully efficient folding. The protein is Protein GrpE of Aliivibrio salmonicida (strain LFI1238) (Vibrio salmonicida (strain LFI1238)).